Here is a 249-residue protein sequence, read N- to C-terminus: INO80 complex subunit 1 (249 aa).

2 consecutive C2H2-type zinc fingers follow at residues Tyr73–His100 and Phe106–His131.

In terms of assembly, component of the INO80 chromatin remodeling complex.

The protein localises to the nucleus. Its subcellular location is the cytoplasm. Its function is as follows. Component of the INO80 complex which remodels chromatin by shifting nucleosomes and is involved in DNA repair. This is INO80 complex subunit 1 (iec1) from Schizosaccharomyces pombe (strain 972 / ATCC 24843) (Fission yeast).